We begin with the raw amino-acid sequence, 279 residues long: S-methyl-5'-thioadenosine phosphorylase (279 aa).

Phosphate-binding positions include serine 13, 55 to 56 (RH), and 88 to 89 (TA). A substrate-binding site is contributed by methionine 191. Threonine 192 serves as a coordination point for phosphate. 215-217 (DYD) contacts substrate.

This sequence belongs to the PNP/MTAP phosphorylase family. MTAP subfamily. In terms of assembly, homotrimer.

It is found in the cytoplasm. The protein localises to the nucleus. The catalysed reaction is S-methyl-5'-thioadenosine + phosphate = 5-(methylsulfanyl)-alpha-D-ribose 1-phosphate + adenine. The protein operates within amino-acid biosynthesis; L-methionine biosynthesis via salvage pathway; S-methyl-5-thio-alpha-D-ribose 1-phosphate from S-methyl-5'-thioadenosine (phosphorylase route): step 1/1. In terms of biological role, catalyzes the reversible phosphorylation of S-methyl-5'-thioadenosine (MTA) to adenine and 5-methylthioribose-1-phosphate. Involved in the breakdown of MTA, a major by-product of polyamine biosynthesis. Responsible for the first step in the methionine salvage pathway after MTA has been generated from S-adenosylmethionine. Has broad substrate specificity with 6-aminopurine nucleosides as preferred substrates. In Anopheles darlingi (Mosquito), this protein is S-methyl-5'-thioadenosine phosphorylase.